The chain runs to 604 residues: Rhotekin-2 (604 aa).

In terms of domain architecture, REM-1 spans 1 to 74; the sequence is MEGQLLRGLA…LQKSKEEIAN (74 aa). Residues 53 to 79 are a coiled coil; that stretch reads VCSARIQAYTAELQKSKEEIANQTGAR. The PH domain maps to 281-387; sequence ADAFAGFLNE…WMGAFRQHFF (107 aa). The interval 481-590 is disordered; the sequence is LSPIGEPAPD…PVPVPRQKSI (110 aa). Over residues 514–527 the composition is skewed to polar residues; it reads GRANQSKDSATQAG. A compositionally biased stretch (low complexity) spans 529–543; that stretch reads SGASSSPSDPRLSPP.

May play an important role in lymphopoiesis. The sequence is that of Rhotekin-2 (Rtkn2) from Mus musculus (Mouse).